We begin with the raw amino-acid sequence, 211 residues long: Cytochrome c biogenesis ATP-binding export protein CcmA (211 aa).

Residues 17-209 enclose the ABC transporter domain; the sequence is LDVEDVTVFR…PSLAHVESFW (193 aa). An ATP-binding site is contributed by 49–56; it reads GPNGAGKS.

The protein belongs to the ABC transporter superfamily. CcmA exporter (TC 3.A.1.107) family. The complex is composed of two ATP-binding proteins (CcmA) and two transmembrane proteins (CcmB).

It localises to the cell inner membrane. The enzyme catalyses heme b(in) + ATP + H2O = heme b(out) + ADP + phosphate + H(+). Part of the ABC transporter complex CcmAB involved in the biogenesis of c-type cytochromes; once thought to export heme, this seems not to be the case, but its exact role is uncertain. Responsible for energy coupling to the transport system. This Gluconobacter oxydans (strain 621H) (Gluconobacter suboxydans) protein is Cytochrome c biogenesis ATP-binding export protein CcmA.